A 726-amino-acid polypeptide reads, in one-letter code: Sensory/regulatory protein RpfC (726 aa).

At 1-22 (MKSPLPWLKRRLSGRADSEHAQ) the chain is on the periplasmic side. The sensor stretch occupies residues 1–22 (MKSPLPWLKRRLSGRADSEHAQ). A helical transmembrane segment spans residues 23-40 (NLIRIIITTLFISYLGWR). The Cytoplasmic portion of the chain corresponds to 41–51 (YQHTHGDTLMA). A helical transmembrane segment spans residues 52 to 72 (TWLILVGELLVSLGLMVAILL). The Periplasmic portion of the chain corresponds to 73–94 (RPQVSHTRRLIGMLLDYTCTGA). A helical transmembrane segment spans residues 95–115 (IMAIQGEPASPLYAVCMWVTI). The Cytoplasmic segment spans residues 116-127 (GNGLRYGSNYLR). A helical membrane pass occupies residues 128 to 148 (AATAMGSLCFLGAILISPYWK). Residues 149 to 151 (ANP) are Periplasmic-facing. A helical membrane pass occupies residues 152 to 172 (YLSWGLLLGLIAVPLYFDSLL). Topologically, residues 173-726 (RAMTRAVREA…DGECSPRSNE (554 aa)) are cytoplasmic. A Histidine kinase domain is found at 195-417 (NMSHEFRTPL…VFWFELPMAI (223 aa)). At His-198 the chain carries Phosphohistidine; by autocatalysis. Residues 463–581 (RMLVADDHEA…KLLDTLADLA (119 aa)) form the Response regulatory domain. A 4-aspartylphosphate modification is found at Asp-512. The HPt domain maps to 618-711 (GEEFERQFVR…KAGKDALDAR (94 aa)). His-657 carries the phosphohistidine modification.

In terms of assembly, at low DSF concentrations, interacts with RpfF. Autophosphorylated. Activation may require a sequential transfer of a phosphate group from a His in the primary transmitter domain, to an Asp in the receiver domain and to a His in the secondary transmitter domain.

The protein localises to the cell inner membrane. It catalyses the reaction ATP + protein L-histidine = ADP + protein N-phospho-L-histidine.. With respect to regulation, binding of DSF to the sensor region causes allosteric change, which facilitates RpfC autophosphorylation. Its function is as follows. Hybrid sensor kinase that regulates diverse biological functions through two distinct molecular mechanisms. At low cell density, the extracellular concentration of the diffusible signaling factor (DSF) is below a threshold, and unphosphorylated RpfC is involved in the negative regulation of DSF synthesis, via direct interaction with the DSF synthase RpfF. Interaction prevents synthesis of DSF, which remains at a basal level. This activity does not involve the phosphorelay mechanism and is not dependent on RpfG. Is also member of the two-component regulatory system RpfG/RpfC, which is involved in the perception and response to DSF, which is essential for cell-cell signaling. At high cell density, the level of extracellular DSF increases and binding of DSF to the sensor region of RpfC causes autophosphorylation of RpfC, which results in the release of RpfF and the activation of RpfG via a four-step phosphorelay. Activation of RpfG leads to the positive regulation of biofilm dispersal and the production of virulence factors. In Xanthomonas campestris pv. campestris (strain 8004), this protein is Sensory/regulatory protein RpfC (rpfC).